The sequence spans 514 residues: ATP synthase subunit alpha (514 aa).

170–177 (GDRQIGKT) is a binding site for ATP.

The protein belongs to the ATPase alpha/beta chains family. As to quaternary structure, F-type ATPases have 2 components, CF(1) - the catalytic core - and CF(0) - the membrane proton channel. CF(1) has five subunits: alpha(3), beta(3), gamma(1), delta(1), epsilon(1). CF(0) has three main subunits: a(1), b(2) and c(9-12). The alpha and beta chains form an alternating ring which encloses part of the gamma chain. CF(1) is attached to CF(0) by a central stalk formed by the gamma and epsilon chains, while a peripheral stalk is formed by the delta and b chains.

The protein localises to the cell inner membrane. It catalyses the reaction ATP + H2O + 4 H(+)(in) = ADP + phosphate + 5 H(+)(out). Produces ATP from ADP in the presence of a proton gradient across the membrane. The alpha chain is a regulatory subunit. This is ATP synthase subunit alpha from Pseudomonas fluorescens (strain SBW25).